A 380-amino-acid chain; its full sequence is Glucose-1-phosphate adenylyltransferase (380 aa).

Alpha-D-glucose 1-phosphate is bound by residues glycine 164, 179-180, and serine 190; that span reads EK.

This sequence belongs to the bacterial/plant glucose-1-phosphate adenylyltransferase family. In terms of assembly, homotetramer.

It catalyses the reaction alpha-D-glucose 1-phosphate + ATP + H(+) = ADP-alpha-D-glucose + diphosphate. Its pathway is glycan biosynthesis; glycogen biosynthesis. Functionally, involved in the biosynthesis of ADP-glucose, a building block required for the elongation reactions to produce glycogen. Catalyzes the reaction between ATP and alpha-D-glucose 1-phosphate (G1P) to produce pyrophosphate and ADP-Glc. This Lactococcus lactis subsp. lactis (strain IL1403) (Streptococcus lactis) protein is Glucose-1-phosphate adenylyltransferase.